A 326-amino-acid polypeptide reads, in one-letter code: BTB/POZ domain-containing protein At1g21780 (326 aa).

A BTB domain is found at 161-228 (TDVIIHTADG…LYGNITQEEF (68 aa)).

In terms of assembly, homodimer. Interacts with CUL3A and CUL3B.

It functions in the pathway protein modification; protein ubiquitination. May act as a substrate-specific adapter of an E3 ubiquitin-protein ligase complex (CUL3-RBX1-BTB) which mediates the ubiquitination and subsequent proteasomal degradation of target proteins. The polypeptide is BTB/POZ domain-containing protein At1g21780 (Arabidopsis thaliana (Mouse-ear cress)).